A 106-amino-acid polypeptide reads, in one-letter code: Phosphoribosyl-ATP pyrophosphatase (106 aa).

Belongs to the PRA-PH family.

It is found in the cytoplasm. The catalysed reaction is 1-(5-phospho-beta-D-ribosyl)-ATP + H2O = 1-(5-phospho-beta-D-ribosyl)-5'-AMP + diphosphate + H(+). It participates in amino-acid biosynthesis; L-histidine biosynthesis; L-histidine from 5-phospho-alpha-D-ribose 1-diphosphate: step 2/9. This is Phosphoribosyl-ATP pyrophosphatase from Lactiplantibacillus plantarum (strain ATCC BAA-793 / NCIMB 8826 / WCFS1) (Lactobacillus plantarum).